The following is a 698-amino-acid chain: MDELQSQTEREARILARRKRIQERLAALREGDHGGGKEGENKEEIGKGKQQIIESKRRLMRVKYRTDQDVSSVRVAGDDRENQHRIQEEQTRQDLRAKLLAEAEQSARQNAAVAMRWADLFSIEVPQDLYNEIESQRQACERIIASKDKLIGEIKGELKKKDDEFVKTLKRQAEDIDTLLQYMSRQFVEVQNAYKEELDEIENAFLQERSDLLESNRREMQELFDKRSRLEQDFMDRYLAAVEAYQSQLEGHRQMDAEEYHILKIRLETDIQNLEQHLEAMRATYQLNTEKLEYNYRVLKEREKENTQTIESQKKKLSRQRDILSSLKQRYAETDRRYRDDNMKLTDEYKRITEQFKDLQSKFRHFELVDTKKYKEVWGMKEADVAALVRQLLQADKVLHEQQLGWDWRPPDDAVFAPVHGDAGSGGGAAAAATGGAAGGAAAAGGVGPNGEEESEEDAAARVREAELAERLRDGRNWGALGLLCDEAGFLIDIKARNMIERLPKDEQGQVKAEAILRSLGIADGSAFDALLEALSADSNIELRAKGMVAPQGRGMAEEKSDRGGTAVLVHPDEAVRRLKAFVEVYGTGPSRGPGGGGGGGGGMSGPMRVQGAMRRAAEREQEFWSRMTHVISDKHTRVWGALEKQLEKYLALLQERAGSLRDVESLQHQNNELRALLNQYLSSRINDELQIPPTQII.

Composition is skewed to basic and acidic residues over residues 27–47 (ALRE…EIGK) and 76–90 (AGDD…QEEQ). Disordered regions lie at residues 27-50 (ALRE…KGKQ) and 71-90 (SSVR…QEEQ). The stretch at 183-367 (MSRQFVEVQN…DLQSKFRHFE (185 aa)) forms a coiled coil. The interval 425-461 (SGGGAAAAATGGAAGGAAAAGGVGPNGEEESEEDAAA) is disordered. The span at 436–449 (GAAGGAAAAGGVGP) shows a compositional bias: gly residues. Residues 655 to 685 (QERAGSLRDVESLQHQNNELRALLNQYLSSR) are a coiled coil.

The protein belongs to the DRC1 family. Component of the nexin-dynein regulatory complex (N-DRC). Interacts with DRC4 and DRC5.

Its subcellular location is the cytoplasm. The protein resides in the cytoskeleton. It is found in the cilium axoneme. It localises to the flagellum axoneme. Component of the nexin-dynein regulatory complex (N-DRC) a key regulator of ciliary/flagellar motility which maintains the alignment and integrity of the distal axoneme and regulates microtubule sliding in motile axonemes. Plays a critical role in the assembly of N-DRC and also stabilizes the assembly of multiple inner dynein arms and radial spokes. Coassembles with DRC2 to form a central scaffold needed for assembly of the N-DRC and its attachment to the outer doublet microtubules. In Chlamydomonas reinhardtii (Chlamydomonas smithii), this protein is Dynein regulatory complex protein 1 (DRC1).